The primary structure comprises 396 residues: DNA replication and repair protein RecF (396 aa).

30–37 is a binding site for ATP; sequence GANGSGKT.

It belongs to the RecF family.

Its subcellular location is the cytoplasm. Functionally, the RecF protein is involved in DNA metabolism; it is required for DNA replication and normal SOS inducibility. RecF binds preferentially to single-stranded, linear DNA. It also seems to bind ATP. The polypeptide is DNA replication and repair protein RecF (Thermomicrobium roseum (strain ATCC 27502 / DSM 5159 / P-2)).